A 741-amino-acid chain; its full sequence is Translation initiation factor IF-2 (741 aa).

Basic and acidic residues-rich tracts occupy residues 48–74 and 107–123; these read HQYR…DKPK and KGKE…EKKA. The disordered stretch occupies residues 48–158; sequence HQYRPKAEKK…PQPAKKEKEL (111 aa). Positions 127 to 139 are enriched in basic residues; sequence AKKKGKGPAKGKK. Residues 140–151 are compositionally biased toward low complexity; that stretch reads QAAPAAKQVPQP. Positions 242 to 411 constitute a tr-type G domain; sequence ERPPVVTIMG…LLVSEMEELK (170 aa). The interval 251–258 is G1; sequence GHVDHGKT. Position 251 to 258 (251 to 258) interacts with GTP; that stretch reads GHVDHGKT. The G2 stretch occupies residues 276-280; sequence GITQH. Residues 297–300 are G3; it reads DTPG. GTP is bound by residues 297–301 and 351–354; these read DTPGH and NKMD. A G4 region spans residues 351 to 354; it reads NKMD. The interval 387–389 is G5; that stretch reads SAK.

The protein belongs to the TRAFAC class translation factor GTPase superfamily. Classic translation factor GTPase family. IF-2 subfamily.

It localises to the cytoplasm. Its function is as follows. One of the essential components for the initiation of protein synthesis. Protects formylmethionyl-tRNA from spontaneous hydrolysis and promotes its binding to the 30S ribosomal subunits. Also involved in the hydrolysis of GTP during the formation of the 70S ribosomal complex. In Geobacillus stearothermophilus (Bacillus stearothermophilus), this protein is Translation initiation factor IF-2 (infB).